A 312-amino-acid chain; its full sequence is 4-hydroxy-3-methylbut-2-enyl diphosphate reductase (312 aa).

C15 contributes to the [4Fe-4S] cluster binding site. Residues H44 and H77 each coordinate (2E)-4-hydroxy-3-methylbut-2-enyl diphosphate. The dimethylallyl diphosphate site is built by H44 and H77. Residues H44 and H77 each contribute to the isopentenyl diphosphate site. A [4Fe-4S] cluster-binding site is contributed by C99. Residue H127 coordinates (2E)-4-hydroxy-3-methylbut-2-enyl diphosphate. A dimethylallyl diphosphate-binding site is contributed by H127. Residue H127 participates in isopentenyl diphosphate binding. The active-site Proton donor is the E129. T167 provides a ligand contact to (2E)-4-hydroxy-3-methylbut-2-enyl diphosphate. C197 is a [4Fe-4S] cluster binding site. (2E)-4-hydroxy-3-methylbut-2-enyl diphosphate-binding residues include S225, S226, N227, and S269. Dimethylallyl diphosphate contacts are provided by S225, S226, N227, and S269. Residues S225, S226, N227, and S269 each coordinate isopentenyl diphosphate.

The protein belongs to the IspH family. [4Fe-4S] cluster serves as cofactor.

It carries out the reaction isopentenyl diphosphate + 2 oxidized [2Fe-2S]-[ferredoxin] + H2O = (2E)-4-hydroxy-3-methylbut-2-enyl diphosphate + 2 reduced [2Fe-2S]-[ferredoxin] + 2 H(+). The catalysed reaction is dimethylallyl diphosphate + 2 oxidized [2Fe-2S]-[ferredoxin] + H2O = (2E)-4-hydroxy-3-methylbut-2-enyl diphosphate + 2 reduced [2Fe-2S]-[ferredoxin] + 2 H(+). It functions in the pathway isoprenoid biosynthesis; dimethylallyl diphosphate biosynthesis; dimethylallyl diphosphate from (2E)-4-hydroxy-3-methylbutenyl diphosphate: step 1/1. The protein operates within isoprenoid biosynthesis; isopentenyl diphosphate biosynthesis via DXP pathway; isopentenyl diphosphate from 1-deoxy-D-xylulose 5-phosphate: step 6/6. Functionally, catalyzes the conversion of 1-hydroxy-2-methyl-2-(E)-butenyl 4-diphosphate (HMBPP) into a mixture of isopentenyl diphosphate (IPP) and dimethylallyl diphosphate (DMAPP). Acts in the terminal step of the DOXP/MEP pathway for isoprenoid precursor biosynthesis. The sequence is that of 4-hydroxy-3-methylbut-2-enyl diphosphate reductase from Aromatoleum aromaticum (strain DSM 19018 / LMG 30748 / EbN1) (Azoarcus sp. (strain EbN1)).